Reading from the N-terminus, the 200-residue chain is Recombination protein RecR (200 aa).

A C4-type zinc finger spans residues 57–72; that stretch reads CNECRTFTEEDVCHIC. Positions 81–176 constitute a Toprim domain; the sequence is GLLCVVESPA…DASRIAHGVP (96 aa).

This sequence belongs to the RecR family.

Its function is as follows. May play a role in DNA repair. It seems to be involved in an RecBC-independent recombinational process of DNA repair. It may act with RecF and RecO. This Vibrio vulnificus (strain CMCP6) protein is Recombination protein RecR.